The primary structure comprises 366 residues: Tubulin-like protein CetZ (366 aa).

GTP is bound by residues 10–14, 103–105, E136, N163, and N181; these read QCGTK and GTG.

Belongs to the CetZ family.

Its subcellular location is the cytoplasm. Its function is as follows. Involved in cell shape control. The protein is Tubulin-like protein CetZ of Pyrococcus furiosus (strain ATCC 43587 / DSM 3638 / JCM 8422 / Vc1).